Consider the following 245-residue polypeptide: Ribosomal RNA large subunit methyltransferase E (245 aa).

A disordered region spans residues 1 to 25 (MTKSPIGGNRSGRKLGQKVKKGKLK). Over residues 11 to 25 (SGRKLGQKVKKGKLK) the composition is skewed to basic residues. S-adenosyl-L-methionine is bound by residues Gly81, Trp83, Asp104, Asp120, and Asp144. The active-site Proton acceptor is the Lys184.

Belongs to the class I-like SAM-binding methyltransferase superfamily. RNA methyltransferase RlmE family.

It localises to the cytoplasm. The catalysed reaction is uridine(2552) in 23S rRNA + S-adenosyl-L-methionine = 2'-O-methyluridine(2552) in 23S rRNA + S-adenosyl-L-homocysteine + H(+). Specifically methylates the uridine in position 2552 of 23S rRNA at the 2'-O position of the ribose in the fully assembled 50S ribosomal subunit. This is Ribosomal RNA large subunit methyltransferase E from Rhizobium meliloti (strain 1021) (Ensifer meliloti).